The sequence spans 188 residues: Elongation factor P (188 aa).

At lysine 34 the chain carries N6-(3,6-diaminohexanoyl)-5-hydroxylysine.

It belongs to the elongation factor P family. May be beta-lysylated on the epsilon-amino group of Lys-34 by the combined action of EpmA and EpmB, and then hydroxylated on the C5 position of the same residue by EpmC (if this protein is present). Lysylation is critical for the stimulatory effect of EF-P on peptide-bond formation. The lysylation moiety may extend toward the peptidyltransferase center and stabilize the terminal 3-CCA end of the tRNA. Hydroxylation of the C5 position on Lys-34 may allow additional potential stabilizing hydrogen-bond interactions with the P-tRNA.

It is found in the cytoplasm. It participates in protein biosynthesis; polypeptide chain elongation. In terms of biological role, involved in peptide bond synthesis. Alleviates ribosome stalling that occurs when 3 or more consecutive Pro residues or the sequence PPG is present in a protein, possibly by augmenting the peptidyl transferase activity of the ribosome. Modification of Lys-34 is required for alleviation. The protein is Elongation factor P of Sodalis glossinidius (strain morsitans).